A 474-amino-acid polypeptide reads, in one-letter code: Aspartyl/glutamyl-tRNA(Asn/Gln) amidotransferase subunit B (474 aa).

This sequence belongs to the GatB/GatE family. GatB subfamily. Heterotrimer of A, B and C subunits.

It carries out the reaction L-glutamyl-tRNA(Gln) + L-glutamine + ATP + H2O = L-glutaminyl-tRNA(Gln) + L-glutamate + ADP + phosphate + H(+). The catalysed reaction is L-aspartyl-tRNA(Asn) + L-glutamine + ATP + H2O = L-asparaginyl-tRNA(Asn) + L-glutamate + ADP + phosphate + 2 H(+). Allows the formation of correctly charged Asn-tRNA(Asn) or Gln-tRNA(Gln) through the transamidation of misacylated Asp-tRNA(Asn) or Glu-tRNA(Gln) in organisms which lack either or both of asparaginyl-tRNA or glutaminyl-tRNA synthetases. The reaction takes place in the presence of glutamine and ATP through an activated phospho-Asp-tRNA(Asn) or phospho-Glu-tRNA(Gln). The protein is Aspartyl/glutamyl-tRNA(Asn/Gln) amidotransferase subunit B of Methanospirillum hungatei JF-1 (strain ATCC 27890 / DSM 864 / NBRC 100397 / JF-1).